Consider the following 978-residue polypeptide: MASFFSDFGLMWYLEELNKKEFMKFKELLQQEILQLGLKHISWTEVKKASREDLANLLLKHYEEKKAWDMTFKIFQKMNRQDLMERAGREIAGHSKLYQVHLKKKLTHDYARKFNIKDQDSLKQKFTQDDCDHFENLLISKATGKKPHMVFLQGVAGIGKSLMLTKLMLAWSEGMVFQNKFSYIFYFCCQDVKKMKRASLAELISKEWPNASAPIEEILSQPEKLLFVIDNLEVMECDMSEWESELCDDCMEKQPVNILMSSLLRRKMLPESSFLVSATPETFEKIEDRIECTNVKMMAGFNESSIKVYFYSLFQDRNRTQEIFSLVRENEQLFSVCQVPVLCWMVATCLKKEIEKGRDPVSICRRITSLYTTYIFNLFIPHSAQYPSKKSQDQLQGLCSLAAEGMWTDTFVFAEEALRRNGIMDSDISTLLDVRILEKSKESEKSYIFLHPSIQEVCAAIFHLLKSHVDHPSQDVKSIEALIFTFLKKVKIQWIFFGSFIFGLLHESEQKKLEAFFGHQLSQEIKRQLYQCLETISGNKELQEQIDGMKLFYCLFEMDDEAFLPQVMNCMEQIKFVAKDYSDVIVAAHCLQHCSTLKKLSLSTQNILSEGQEHSYTEKLLICWHHVCSVLTSSKDIHVLQVKDTNFNERAFLVLYSHLKYPSCILKVLEVNNVTLLCDNRLLFELIQNQRLQLLNLSLTFLSHNDVKLLCDVLNQAECNIEKLMVADCNLSPDDCKVFVSVLISSKMLKHLNLSSNNLDKGISSLSKALCHPDCVLKNLVLAKCSLSEECWHYLSEVLRRNKTLTHLDISFNDLKDEGLKVLCGALTLPDSVLISLSVRYCLITTSGCQDLAEVLRNNQNLRNLQISNNKIEDAGVKLLCDAIKHPNCHLENIGLEACALTGACCEDLASSFTHCKTLLGINLQENALDHSGLVALFEAMKQQQCTVNLRGLRITDFDKETQEFLMAEKEKNPYLSI.

The Pyrin domain maps to 1–93; it reads MASFFSDFGL…MERAGREIAG (93 aa). Residues 148 to 471 enclose the NACHT domain; sequence HMVFLQGVAG…FHLLKSHVDH (324 aa). 154 to 161 provides a ligand contact to ATP; it reads GVAGIGKS. LRR repeat units lie at residues 594 to 617, 694 to 717, 746 to 773, 802 to 825, 859 to 882, and 916 to 940; these read CSTL…HSYT, LLNL…LNQA, SKML…LCHP, NKTL…VLCG, NQNL…LLCD, and CKTL…LFEA.

This sequence belongs to the NLRP family.

May be involved in inflammation and recognition of cytosolic pathogen-associated molecular patterns (PAMPs) not intercepted by membrane-bound receptors. The sequence is that of NACHT, LRR and PYD domains-containing protein 4E (Nlrp4e) from Mus musculus (Mouse).